Here is a 1654-residue protein sequence, read N- to C-terminus: Adapter protein unc-53 (1654 aa).

Residues 6-115 enclose the Calponin-homology (CH) domain; sequence VELIPIYTDW…LLFLLSTYKQ (110 aa). 8 disordered regions span residues 128–261, 274–364, 381–440, 480–501, 595–626, 650–680, 698–729, and 747–799; these read EQLP…PQTQ, SKLA…GSAT, APII…SSDD, VKST…QPTI, AQVT…GYTS, AQNG…ISTD, SHFV…RAEQ, and AATS…SGQF. Over residues 143–161 the composition is skewed to low complexity; that stretch reads PSPRVATSATASATNPNSN. The segment covering 162-174 has biased composition (polar residues); it reads FPQMSTSRLQTPQ. Low complexity predominate over residues 197 to 243; sequence PSSSTTSSNNTNSFRPSSRSSGNNNVGSTISTSAKSLESSSTYSSIS. A compositionally biased stretch (polar residues) spans 244–261; the sequence is NLNRPTSQLQKPSRPQTQ. A compositionally biased stretch (low complexity) spans 310 to 327; it reads LKLKLFSSKNPSSSSNSP. Positions 388–397 are enriched in basic and acidic residues; sequence DSKRCSKSSE. The span at 407-429 shows a compositional bias: low complexity; that stretch reads STSPTSSSTEGSLSMHSTSSKSS. Positions 595–607 are enriched in polar residues; that stretch reads AQVTPPTKTSGNH. Residues 705-722 are compositionally biased toward low complexity; sequence TSSSSKPRVPSRSSTSVD. Composition is skewed to polar residues over residues 747 to 769 and 779 to 799; these read AATS…SPHL and SMHS…SGQF. Residues 962 to 994 adopt a coiled-coil conformation; the sequence is LNEKYEHAIRDMARDLECYKNTVDSLTKKQENY. The disordered stretch occupies residues 1059–1083; sequence LESVASHRSSMSSSSKSSKQEKISL. Residues 1061–1083 are compositionally biased toward low complexity; the sequence is SVASHRSSMSSSSKSSKQEKISL. Positions 1152–1184 form a coiled coil; it reads DRAREVDVLRETVNKLKTENKQLKKEVDKLTNG.

This sequence belongs to the Nav/unc-53 family. In terms of assembly, interacts with sem-5. Interacts with cmd-1 in the presence of Ca(2+).

In terms of biological role, involved in the migration and outgrowth of muscles, axons and excretory canals. This chain is Adapter protein unc-53 (unc-53), found in Caenorhabditis elegans.